The sequence spans 491 residues: Aspartyl/glutamyl-tRNA(Asn/Gln) amidotransferase subunit B (491 aa).

Belongs to the GatB/GatE family. GatB subfamily. Heterotrimer of A, B and C subunits.

The catalysed reaction is L-glutamyl-tRNA(Gln) + L-glutamine + ATP + H2O = L-glutaminyl-tRNA(Gln) + L-glutamate + ADP + phosphate + H(+). The enzyme catalyses L-aspartyl-tRNA(Asn) + L-glutamine + ATP + H2O = L-asparaginyl-tRNA(Asn) + L-glutamate + ADP + phosphate + 2 H(+). Allows the formation of correctly charged Asn-tRNA(Asn) or Gln-tRNA(Gln) through the transamidation of misacylated Asp-tRNA(Asn) or Glu-tRNA(Gln) in organisms which lack either or both of asparaginyl-tRNA or glutaminyl-tRNA synthetases. The reaction takes place in the presence of glutamine and ATP through an activated phospho-Asp-tRNA(Asn) or phospho-Glu-tRNA(Gln). In Burkholderia cenocepacia (strain ATCC BAA-245 / DSM 16553 / LMG 16656 / NCTC 13227 / J2315 / CF5610) (Burkholderia cepacia (strain J2315)), this protein is Aspartyl/glutamyl-tRNA(Asn/Gln) amidotransferase subunit B.